The sequence spans 564 residues: MVRNSSDEEEDHRNLIPQNDTRDNDLNLRPDARTVNMANGGGRSPRSALQIDEILSRARNRWKISVNKRYVVAAVSLTLFVGLLFLFTDTRTFFSSFKLDPMSSRVKESELQALNLLRQQQLALVSLLNRTNFNSSNAISSSVVIDNVKAALLKQISVNKEIEEVLLSPHRTGNYSITASGSDSFTGSYNADICRKVDQKLLDRKTIEWKPRPDKFLFAICLSGQMSNHLICLEKHMFFAALLDRVLVIPSSKFDYQYDKVIDIERINTCLGRTVVISFDQFKEIDKKNNAHIDRFICYVSSPQPCYVDEDHIKKLKGLGVSIGGKLEAPWSEDIKKPTKRTSQEVVEKFKSDDGVIAIGDVFYADMEQDLVMQPGGPINHKCKTLIEPSRLILVTAQRFIQTFLGKNFISLHLRRHGFLKFCNAKSPSCFYPIPQAADCISRMVERANAPVIYLSTDAAESETGLLQSLVVVDGKVVPLVKRPPQNSAEKWDSLLYRHGIEDDSQVYAMLDKTICAMSSVFIGASGSTFTEDILRLRKDWGTSSMCDEYLCRGEEPNFIAENE.

Residues methionine 1 to leucine 28 form a disordered region. Residues tyrosine 70 to threonine 90 traverse the membrane as a helical; Signal-anchor for type II membrane protein segment. N-linked (GlcNAc...) asparagine glycans are attached at residues asparagine 129, asparagine 134, and asparagine 174. Substrate contacts are provided by residues histidine 413 to arginine 415 and threonine 529 to phenylalanine 530.

The protein belongs to the glycosyltransferase GT106 family.

The protein resides in the membrane. Its pathway is glycan metabolism. This chain is O-fucosyltransferase 5, found in Arabidopsis thaliana (Mouse-ear cress).